The chain runs to 473 residues: Cysteine--tRNA ligase (473 aa).

Residue cysteine 28 coordinates Zn(2+). Positions 30–40 (MTVYDYCHLGH) match the 'HIGH' region motif. Zn(2+) is bound by residues cysteine 209, histidine 234, and glutamate 238. The 'KMSKS' region signature appears at 282 to 286 (KMSKS). Lysine 285 lines the ATP pocket.

It belongs to the class-I aminoacyl-tRNA synthetase family. As to quaternary structure, monomer. Requires Zn(2+) as cofactor.

The protein resides in the cytoplasm. The enzyme catalyses tRNA(Cys) + L-cysteine + ATP = L-cysteinyl-tRNA(Cys) + AMP + diphosphate. The protein is Cysteine--tRNA ligase of Neisseria gonorrhoeae (strain ATCC 700825 / FA 1090).